Reading from the N-terminus, the 342-residue chain is Nicotinate-nucleotide--dimethylbenzimidazole phosphoribosyltransferase (342 aa).

Glu-311 acts as the Proton acceptor in catalysis.

The protein belongs to the CobT family.

It carries out the reaction 5,6-dimethylbenzimidazole + nicotinate beta-D-ribonucleotide = alpha-ribazole 5'-phosphate + nicotinate + H(+). It participates in nucleoside biosynthesis; alpha-ribazole biosynthesis; alpha-ribazole from 5,6-dimethylbenzimidazole: step 1/2. Its function is as follows. Catalyzes the synthesis of alpha-ribazole-5'-phosphate from nicotinate mononucleotide (NAMN) and 5,6-dimethylbenzimidazole (DMB). In Shewanella loihica (strain ATCC BAA-1088 / PV-4), this protein is Nicotinate-nucleotide--dimethylbenzimidazole phosphoribosyltransferase.